The primary structure comprises 357 residues: 2-oxoglutarate-dependent dioxygenase 11 (357 aa).

A Fe2OG dioxygenase domain is found at 207-307; it reads QPRGLRMAYY…RISAALFHYP (101 aa). Fe cation contacts are provided by His231, Asp233, and His288. Residue Arg298 coordinates 2-oxoglutarate.

Belongs to the iron/ascorbate-dependent oxidoreductase family. The cofactor is Fe(2+). Requires L-ascorbate as cofactor. Expressed in shoots.

It is found in the cytoplasm. The enzyme catalyses melatonin + 2-oxoglutarate + O2 = 2-hydroxymelatonin + succinate + CO2. Its function is as follows. Involved in melatonin degradation. Catalyzes the hydroxylation of melatonin to produce 2-hydroxymelatonin. The protein is 2-oxoglutarate-dependent dioxygenase 11 of Oryza sativa subsp. japonica (Rice).